A 124-amino-acid chain; its full sequence is Small ribosomal subunit protein bS6 (124 aa).

A disordered region spans residues 96–124; it reads ETGPSPMMKEVQREEAKKAAAAQPTEAQA. Residues 114–124 show a composition bias toward low complexity; sequence AAAAQPTEAQA.

This sequence belongs to the bacterial ribosomal protein bS6 family.

Functionally, binds together with bS18 to 16S ribosomal RNA. In Burkholderia vietnamiensis (strain G4 / LMG 22486) (Burkholderia cepacia (strain R1808)), this protein is Small ribosomal subunit protein bS6.